A 440-amino-acid polypeptide reads, in one-letter code: Chromosome partition protein MukF (440 aa).

A leucine-zipper region spans residues 208 to 236; sequence LSETSGTLRELQDTLEAAGDKLQANLLRI.

This sequence belongs to the MukF family. Interacts, and probably forms a ternary complex, with MukE and MukB via its C-terminal region. The complex formation is stimulated by calcium or magnesium. It is required for an interaction between MukE and MukB.

It is found in the cytoplasm. The protein resides in the nucleoid. Functionally, involved in chromosome condensation, segregation and cell cycle progression. May participate in facilitating chromosome segregation by condensation DNA from both sides of a centrally located replisome during cell division. Not required for mini-F plasmid partitioning. Probably acts via its interaction with MukB and MukE. Overexpression results in anucleate cells. It has a calcium binding activity. This chain is Chromosome partition protein MukF, found in Photorhabdus laumondii subsp. laumondii (strain DSM 15139 / CIP 105565 / TT01) (Photorhabdus luminescens subsp. laumondii).